The following is a 197-amino-acid chain: uncharacterized protein (197 aa).

The chain crosses the membrane as a helical span at residues 103–123 (LAIVLPVLANLIMCAMLAWYL).

The protein resides in the host membrane. This is an uncharacterized protein from Equus caballus (Horse).